The chain runs to 78 residues: Acyl carrier protein (78 aa).

The Carrier domain maps to 2 to 77 (QNIEKKIKKI…SIFDIIKKYV (76 aa)). The residue at position 37 (serine 37) is an O-(pantetheine 4'-phosphoryl)serine.

Belongs to the acyl carrier protein (ACP) family. Post-translationally, 4'-phosphopantetheine is transferred from CoA to a specific serine of apo-ACP by AcpS. This modification is essential for activity because fatty acids are bound in thioester linkage to the sulfhydryl of the prosthetic group.

It is found in the cytoplasm. It functions in the pathway lipid metabolism; fatty acid biosynthesis. Carrier of the growing fatty acid chain in fatty acid biosynthesis. This chain is Acyl carrier protein, found in Buchnera aphidicola subsp. Baizongia pistaciae (strain Bp).